A 206-amino-acid chain; its full sequence is Reticulon-like protein B13 (206 aa).

A Reticulon domain is found at 16–206 (VEDIYLWRRK…GTEEKVKKSE (191 aa)). 3 helical membrane-spanning segments follow: residues 27-47 (LAFSTLLVSTSTWILLSFYGF), 50-70 (ITIVSWIGIAVVSMIFLWGSL), and 134-154 (IGNLLDFHTCLFIGLVMGLTV).

The protein resides in the endoplasmic reticulum membrane. This is Reticulon-like protein B13 (RTNLB13) from Arabidopsis thaliana (Mouse-ear cress).